The following is a 454-amino-acid chain: Bifunctional protein GlmU (454 aa).

The segment at 1-226 (MSLEIVILAA…AMEVQGVNDR (226 aa)) is pyrophosphorylase. UDP-N-acetyl-alpha-D-glucosamine is bound by residues 8-11 (LAAG), lysine 22, glutamine 73, 78-79 (GT), 99-101 (YGD), glycine 136, glutamate 151, asparagine 166, and asparagine 224. Aspartate 101 is a binding site for Mg(2+). Position 224 (asparagine 224) interacts with Mg(2+). The interval 227–247 (MQQAQLERHYQRLRAEELMRQ) is linker. The interval 248–454 (GVTLLDPQRL…NWKRPEKIRK (207 aa)) is N-acetyltransferase. 2 residues coordinate UDP-N-acetyl-alpha-D-glucosamine: arginine 330 and lysine 348. Residue histidine 360 is the Proton acceptor of the active site. Positions 363 and 374 each coordinate UDP-N-acetyl-alpha-D-glucosamine. Acetyl-CoA-binding positions include alanine 377, 383 to 384 (NY), serine 402, alanine 420, and arginine 437.

This sequence in the N-terminal section; belongs to the N-acetylglucosamine-1-phosphate uridyltransferase family. In the C-terminal section; belongs to the transferase hexapeptide repeat family. As to quaternary structure, homotrimer. Requires Mg(2+) as cofactor.

It localises to the cytoplasm. It catalyses the reaction alpha-D-glucosamine 1-phosphate + acetyl-CoA = N-acetyl-alpha-D-glucosamine 1-phosphate + CoA + H(+). It carries out the reaction N-acetyl-alpha-D-glucosamine 1-phosphate + UTP + H(+) = UDP-N-acetyl-alpha-D-glucosamine + diphosphate. Its pathway is nucleotide-sugar biosynthesis; UDP-N-acetyl-alpha-D-glucosamine biosynthesis; N-acetyl-alpha-D-glucosamine 1-phosphate from alpha-D-glucosamine 6-phosphate (route II): step 2/2. It participates in nucleotide-sugar biosynthesis; UDP-N-acetyl-alpha-D-glucosamine biosynthesis; UDP-N-acetyl-alpha-D-glucosamine from N-acetyl-alpha-D-glucosamine 1-phosphate: step 1/1. It functions in the pathway bacterial outer membrane biogenesis; LPS lipid A biosynthesis. Catalyzes the last two sequential reactions in the de novo biosynthetic pathway for UDP-N-acetylglucosamine (UDP-GlcNAc). The C-terminal domain catalyzes the transfer of acetyl group from acetyl coenzyme A to glucosamine-1-phosphate (GlcN-1-P) to produce N-acetylglucosamine-1-phosphate (GlcNAc-1-P), which is converted into UDP-GlcNAc by the transfer of uridine 5-monophosphate (from uridine 5-triphosphate), a reaction catalyzed by the N-terminal domain. This chain is Bifunctional protein GlmU, found in Pseudomonas paraeruginosa (strain DSM 24068 / PA7) (Pseudomonas aeruginosa (strain PA7)).